Consider the following 144-residue polypeptide: MLNIEQIKEIIPHRYPFLLVDKILEVDEGKRAVGIKNVSANEEFFNGHFPDYAVMPGVLIVEALAQVGAVAVLKKEENRGRLAFFAGIDNCRFKKQVRPGDQLRLEVEMTRVRGPIGKGKAIATVDGEIACEAEITFAIGDKKE.

The active site involves His-48.

It belongs to the thioester dehydratase family. FabZ subfamily.

The protein resides in the cytoplasm. It catalyses the reaction a (3R)-hydroxyacyl-[ACP] = a (2E)-enoyl-[ACP] + H2O. Its function is as follows. Involved in unsaturated fatty acids biosynthesis. Catalyzes the dehydration of short chain beta-hydroxyacyl-ACPs and long chain saturated and unsaturated beta-hydroxyacyl-ACPs. This is 3-hydroxyacyl-[acyl-carrier-protein] dehydratase FabZ from Bacillus cereus (strain AH187).